The primary structure comprises 483 residues: Glycogen synthase (483 aa).

ADP-alpha-D-glucose is bound at residue Lys-18.

Belongs to the glycosyltransferase 1 family. Bacterial/plant glycogen synthase subfamily.

It catalyses the reaction [(1-&gt;4)-alpha-D-glucosyl](n) + ADP-alpha-D-glucose = [(1-&gt;4)-alpha-D-glucosyl](n+1) + ADP + H(+). It participates in glycan biosynthesis; glycogen biosynthesis. In terms of biological role, synthesizes alpha-1,4-glucan chains using ADP-glucose. The protein is Glycogen synthase of Rhodopseudomonas palustris (strain ATCC BAA-98 / CGA009).